A 352-amino-acid polypeptide reads, in one-letter code: Holliday junction branch migration complex subunit RuvB (352 aa).

A disordered region spans residues 1–42 (MAIVSSSAGRADSQPPAAKSRVVDASPLPEEASPAREDGLRP). The tract at residues 13–201 (SQPPAAKSRV…FGLIQRLEFY (189 aa)) is large ATPase domain (RuvB-L). A compositionally biased stretch (basic and acidic residues) spans 33 to 42 (SPAREDGLRP). L40, R41, G82, K85, T86, T87, R191, Y201, and R238 together coordinate ATP. T86 is a binding site for Mg(2+). The small ATPAse domain (RuvB-S) stretch occupies residues 202-273 (GLEDLQAIVE…LVDEALTLHR (72 aa)). The interval 276 to 352 (ARGLDASDRR…RRHLGWPELP (77 aa)) is head domain (RuvB-H). 2 residues coordinate DNA: R331 and R336.

The protein belongs to the RuvB family. As to quaternary structure, homohexamer. Forms an RuvA(8)-RuvB(12)-Holliday junction (HJ) complex. HJ DNA is sandwiched between 2 RuvA tetramers; dsDNA enters through RuvA and exits via RuvB. An RuvB hexamer assembles on each DNA strand where it exits the tetramer. Each RuvB hexamer is contacted by two RuvA subunits (via domain III) on 2 adjacent RuvB subunits; this complex drives branch migration. In the full resolvosome a probable DNA-RuvA(4)-RuvB(12)-RuvC(2) complex forms which resolves the HJ.

It localises to the cytoplasm. The catalysed reaction is ATP + H2O = ADP + phosphate + H(+). In terms of biological role, the RuvA-RuvB-RuvC complex processes Holliday junction (HJ) DNA during genetic recombination and DNA repair, while the RuvA-RuvB complex plays an important role in the rescue of blocked DNA replication forks via replication fork reversal (RFR). RuvA specifically binds to HJ cruciform DNA, conferring on it an open structure. The RuvB hexamer acts as an ATP-dependent pump, pulling dsDNA into and through the RuvAB complex. RuvB forms 2 homohexamers on either side of HJ DNA bound by 1 or 2 RuvA tetramers; 4 subunits per hexamer contact DNA at a time. Coordinated motions by a converter formed by DNA-disengaged RuvB subunits stimulates ATP hydrolysis and nucleotide exchange. Immobilization of the converter enables RuvB to convert the ATP-contained energy into a lever motion, pulling 2 nucleotides of DNA out of the RuvA tetramer per ATP hydrolyzed, thus driving DNA branch migration. The RuvB motors rotate together with the DNA substrate, which together with the progressing nucleotide cycle form the mechanistic basis for DNA recombination by continuous HJ branch migration. Branch migration allows RuvC to scan DNA until it finds its consensus sequence, where it cleaves and resolves cruciform DNA. The chain is Holliday junction branch migration complex subunit RuvB from Prochlorococcus marinus (strain MIT 9313).